A 760-amino-acid polypeptide reads, in one-letter code: Amyloid beta precursor protein binding family B member 2 (760 aa).

A phosphoserine mark is found at serine 123 and serine 160. Disordered stretches follow at residues 177–295 (QNLG…LPPG) and 324–351 (PADL…KQPW). Polar residues-rich tracts occupy residues 212–230 (NKPQ…SSSP) and 261–275 (SWTT…PSSP). Positions 290–322 (PDLPPGWKRVNDIAGTYYWHIPTGTTQWERPVS) constitute a WW domain. Phosphoserine occurs at positions 334, 409, and 412. PID domains lie at 413–580 (DPEA…LQVD) and 586–738 (TELV…VTTN).

As to quaternary structure, interacts (via C-terminus) with APP (via C-terminus). Interacts with APLP2 (via cytoplasmic domain). In terms of tissue distribution, expressed in the brain, retinal lens and muscle cells (at protein level).

Its subcellular location is the endoplasmic reticulum. It localises to the golgi apparatus. The protein localises to the early endosome. Plays a role in the maintenance of lens transparency, and may also play a role in muscle cell strength. Involved in hippocampal neurite branching and neuromuscular junction formation, as a result plays a role in spatial memory functioning. Activates transcription of APP. The protein is Amyloid beta precursor protein binding family B member 2 of Mus musculus (Mouse).